The primary structure comprises 203 residues: Pyridoxal 5'-phosphate synthase subunit PdxT (203 aa).

49 to 51 (GES) provides a ligand contact to L-glutamine. Cys81 serves as the catalytic Nucleophile. L-glutamine is bound by residues Arg110 and 139-140 (IR). Active-site charge relay system residues include His175 and Glu177.

Belongs to the glutaminase PdxT/SNO family. In terms of assembly, in the presence of PdxS, forms a dodecamer of heterodimers. Only shows activity in the heterodimer.

It catalyses the reaction aldehydo-D-ribose 5-phosphate + D-glyceraldehyde 3-phosphate + L-glutamine = pyridoxal 5'-phosphate + L-glutamate + phosphate + 3 H2O + H(+). It carries out the reaction L-glutamine + H2O = L-glutamate + NH4(+). Its pathway is cofactor biosynthesis; pyridoxal 5'-phosphate biosynthesis. Its function is as follows. Catalyzes the hydrolysis of glutamine to glutamate and ammonia as part of the biosynthesis of pyridoxal 5'-phosphate. The resulting ammonia molecule is channeled to the active site of PdxS. The polypeptide is Pyridoxal 5'-phosphate synthase subunit PdxT (Parafrankia sp. (strain EAN1pec)).